A 1039-amino-acid chain; its full sequence is Antigenic heat-stable 120 kDa protein (1039 aa).

Disordered stretches follow at residues M1–P115, S408–P438, and Q1020–R1039. The span at P31–T44 shows a compositional bias: polar residues. Residues E54–E69 show a composition bias toward basic and acidic residues. A compositionally biased stretch (low complexity) spans F85–D114. Positions A424 to P438 are enriched in polar residues. The span at I1030–R1039 shows a compositional bias: basic and acidic residues.

The protein localises to the cytoplasm. This Rickettsia felis (strain ATCC VR-1525 / URRWXCal2) (Rickettsia azadi) protein is Antigenic heat-stable 120 kDa protein (sca4).